The sequence spans 728 residues: Golgin subfamily A member 5 (728 aa).

Serine 2 carries the post-translational modification N-acetylserine. Over serine 2–arginine 695 the chain is Cytoplasmic. A dimethylated arginine mark is found at arginine 27 and arginine 89. Positions serine 88–serine 202 are disordered. Serine 116 is modified (phosphoserine). Residues proline 134–lysine 146 show a composition bias toward basic and acidic residues. Low complexity predominate over residues serine 152 to threonine 167. A compositionally biased stretch (polar residues) spans glutamate 173–serine 187. A coiled-coil region spans residues glycine 216–threonine 628. A helical; Anchor for type IV membrane protein membrane pass occupies residues valine 696–tyrosine 716. Residues serine 717–lysine 728 are Lumenal-facing.

Homodimer. Interacts with RAB1A that has been activated by GTP-binding. Interacts with isoform CASP of CUX1. Post-translationally, highly phosphorylated during mitosis. Phosphorylation is barely detectable during interphase.

Its subcellular location is the golgi apparatus membrane. Its function is as follows. Involved in maintaining Golgi structure. Stimulates the formation of Golgi stacks and ribbons. Involved in intra-Golgi retrograde transport. This Rattus norvegicus (Rat) protein is Golgin subfamily A member 5 (Golga5).